The following is a 736-amino-acid chain: Poly(A) polymerase gamma (736 aa).

Position 2 is an N6-acetyllysine (Lys-2). Ser-23 and Ser-29 each carry phosphoserine. ATP-binding positions include 99 to 101 (FGS), Thr-108, 112 to 114 (DID), Asp-166, Lys-227, Tyr-236, and 245 to 246 (GV). 3 residues coordinate Mg(2+): Asp-112, Asp-114, and Asp-166. The tract at residues 506–564 (KQSLSDVNRSSGGLQSKRLSLDSSCLDSSRDTDNGTPFNSPASKSDSPSVGETERNSAE) is disordered. The span at 509 to 519 (LSDVNRSSGGL) shows a compositional bias: polar residues. Positions 521-532 (SKRLSLDSSCLD) are enriched in low complexity. Ser-525 bears the Phosphoserine mark. The span at 539–555 (NGTPFNSPASKSDSPSV) shows a compositional bias: polar residues. A phosphoserine mark is found at Ser-599 and Ser-648. Position 654 is a phosphothreonine (Thr-654). Positions 673 to 685 (DPRTAEERKRKSV) are enriched in basic and acidic residues. The tract at residues 673-720 (DPRTAEERKRKSVDAIGGESMPIPTIDTSRKKRLPSKELPDSSSPVPA) is disordered. Ser-684 and Ser-708 each carry phosphoserine.

It belongs to the poly(A) polymerase family. The cofactor is Mg(2+). It depends on Mn(2+) as a cofactor. Expressed predominantly in testis, and weakly in other tissues. Overexpressed in several tumors.

It is found in the nucleus. It carries out the reaction RNA(n) + ATP = RNA(n)-3'-adenine ribonucleotide + diphosphate. Responsible for the post-transcriptional adenylation of the 3'-terminal of mRNA precursors and several small RNAs including signal recognition particle (SRP) RNA, nuclear 7SK RNA, U2 small nuclear RNA, and ribosomal 5S RNA. This Homo sapiens (Human) protein is Poly(A) polymerase gamma.